Consider the following 249-residue polypeptide: tRNA pseudouridine synthase A (249 aa).

Asp53 acts as the Nucleophile in catalysis. Position 111 (Tyr111) interacts with substrate.

Belongs to the tRNA pseudouridine synthase TruA family. In terms of assembly, homodimer.

The catalysed reaction is uridine(38/39/40) in tRNA = pseudouridine(38/39/40) in tRNA. Functionally, formation of pseudouridine at positions 38, 39 and 40 in the anticodon stem and loop of transfer RNAs. The protein is tRNA pseudouridine synthase A of Streptococcus pneumoniae (strain Taiwan19F-14).